Reading from the N-terminus, the 256-residue chain is Mediator of RNA polymerase II transcription subunit 7 (256 aa).

Disordered stretches follow at residues 1–20 (MEEG…PPPF) and 208–244 (EAEG…NGEQ). The span at 223–242 (TPESGPHNTKTQTSESQANG) shows a compositional bias: polar residues.

It belongs to the Mediator complex subunit 7 family. Component of the Mediator complex.

The protein resides in the nucleus. Its function is as follows. Component of the Mediator complex, a coactivator involved in the regulated transcription of nearly all RNA polymerase II-dependent genes. Mediator functions as a bridge to convey information from gene-specific regulatory proteins to the basal RNA polymerase II transcription machinery. Mediator is recruited to promoters by direct interactions with regulatory proteins and serves as a scaffold for the assembly of a functional preinitiation complex with RNA polymerase II and the general transcription factors. The protein is Mediator of RNA polymerase II transcription subunit 7 (MED7) of Coccidioides immitis (strain RS) (Valley fever fungus).